The following is a 322-amino-acid chain: Homoserine kinase (322 aa).

Residue 107 to 117 (PLSSGMGGSAA) coordinates ATP.

This sequence belongs to the GHMP kinase family. Homoserine kinase subfamily.

The protein resides in the cytoplasm. It carries out the reaction L-homoserine + ATP = O-phospho-L-homoserine + ADP + H(+). It participates in amino-acid biosynthesis; L-threonine biosynthesis; L-threonine from L-aspartate: step 4/5. Catalyzes the ATP-dependent phosphorylation of L-homoserine to L-homoserine phosphate. In Xylella fastidiosa (strain M23), this protein is Homoserine kinase.